A 254-amino-acid polypeptide reads, in one-letter code: Small ribosomal subunit protein uS2 (254 aa).

Residues 225–254 (ALSERKREKDDAKLKEDEESKKASDKAEIQ) form a disordered region. Basic and acidic residues predominate over residues 226 to 254 (LSERKREKDDAKLKEDEESKKASDKAEIQ).

This sequence belongs to the universal ribosomal protein uS2 family.

This chain is Small ribosomal subunit protein uS2, found in Cytophaga hutchinsonii (strain ATCC 33406 / DSM 1761 / CIP 103989 / NBRC 15051 / NCIMB 9469 / D465).